We begin with the raw amino-acid sequence, 297 residues long: Protein LRATD1 (297 aa).

A Phosphoserine modification is found at Ser38. An LRAT domain is found at 138–233 (PAPEPPAPAP…CRFGKREFKA (96 aa)).

This sequence belongs to the LRATD family.

It is found in the cytoplasm. May play a role in cell morphology and motility. In Bos taurus (Bovine), this protein is Protein LRATD1 (LRATD1).